Reading from the N-terminus, the 475-residue chain is Dihydrolipoyl dehydrogenase (475 aa).

Residues 36–45 (ERYNTLGGVC), Lys-54, and Gly-117 each bind FAD. The cysteines at positions 45 and 50 are disulfide-linked. Residues 182–186 (GGGII), Glu-205, Val-238, and 270–273 (AIGR) each bind NAD(+). FAD contacts are provided by Asp-313 and Ala-321. Catalysis depends on His-445, which acts as the Proton acceptor.

This sequence belongs to the class-I pyridine nucleotide-disulfide oxidoreductase family. FAD is required as a cofactor.

It is found in the cytoplasm. It carries out the reaction N(6)-[(R)-dihydrolipoyl]-L-lysyl-[protein] + NAD(+) = N(6)-[(R)-lipoyl]-L-lysyl-[protein] + NADH + H(+). In terms of biological role, the branched-chain alpha-keto dehydrogenase complex catalyzes the overall conversion of alpha-keto acids to acyl-CoA and CO(2). It contains multiple copies of 3 enzymatic components: branched-chain alpha-keto acid decarboxylase (E1), lipoamide acyltransferase (E2) and lipoamide dehydrogenase (E3). The polypeptide is Dihydrolipoyl dehydrogenase (lpd) (Vibrio cholerae serotype O1 (strain ATCC 39315 / El Tor Inaba N16961)).